Here is a 699-residue protein sequence, read N- to C-terminus: Polyribonucleotide nucleotidyltransferase (699 aa).

Asp-493 and Asp-499 together coordinate Mg(2+). A KH domain is found at 560 to 620 (PLIANIEIDP…NKVNQAIEYI (61 aa)). The region spanning 630 to 697 (GDMFEGKITR…DSGRIQLGKA (68 aa)) is the S1 motif domain.

This sequence belongs to the polyribonucleotide nucleotidyltransferase family. Requires Mg(2+) as cofactor.

It is found in the cytoplasm. It catalyses the reaction RNA(n+1) + phosphate = RNA(n) + a ribonucleoside 5'-diphosphate. Involved in mRNA degradation. Catalyzes the phosphorolysis of single-stranded polyribonucleotides processively in the 3'- to 5'-direction. The sequence is that of Polyribonucleotide nucleotidyltransferase from Thermosipho melanesiensis (strain DSM 12029 / CIP 104789 / BI429).